The sequence spans 818 residues: Sorting nexin-29 (818 aa).

The RUN domain maps to 36-180 (SDSDSRVTCL…ILFAINIDNK (145 aa)). The interval 267 to 299 (VSFDDDEEEQGTGDTLKKMPGTAESSEENSDRS) is disordered. A phosphoserine mark is found at S268, S291, S292, S330, S344, S447, and S452. Disordered regions lie at residues 343-375 (KSID…PDRT) and 441-462 (RYRE…PSAS). The segment covering 445-462 (ASSPGQGSPLSSLLPSAS) has biased composition (low complexity). Residues 467–547 (MTVHELRQAI…VLKVQLKKYV (81 aa)) adopt a coiled-coil conformation. Phosphoserine is present on S642. T644 carries the phosphothreonine modification. Phosphoserine occurs at positions 645 and 649. The PX domain occupies 659–782 (ALINVWIPSV…PFFVDITPPG (124 aa)). Residues 781–818 (PGEPLNKSSRPKAVSRFPKLSRGHPREVRNVEPQSGDL) are disordered.

This sequence belongs to the sorting nexin family.

This is Sorting nexin-29 (Snx29) from Mus musculus (Mouse).